A 242-amino-acid polypeptide reads, in one-letter code: Venom nerve growth factor 1 (242 aa).

Positions 1–18 are cleaved as a signal peptide; sequence MSMLCYTLIIAFLIGIWA. Residues 19–125 constitute a propeptide that is removed on maturation; sequence APQSEDNVPL…ALNRNIQAKR (107 aa). 3 disulfide bridges follow: C139–C203, C181–C231, and C191–C233.

Belongs to the NGF-beta family. In terms of assembly, homodimer; non-covalently linked. In terms of tissue distribution, expressed by the venom gland.

The protein localises to the secreted. Functionally, nerve growth factor is important for the development and maintenance of the sympathetic and sensory nervous systems. It stimulates division and differentiation of sympathetic and embryonic sensory neurons as well as basal forebrain cholinergic neurons in the brain. Its relevance in the snake venom is not clear. However, it has been shown to inhibit metalloproteinase-dependent proteolysis of platelet glycoprotein Ib alpha, suggesting a metalloproteinase inhibition to prevent metalloprotease autodigestion and/or protection against prey proteases. Binds a lipid between the two protein chains in the homodimer. The lipid-bound form promotes histamine relase from mouse mast cells, contrary to the lipid-free form. In Pseudechis australis (Mulga snake), this protein is Venom nerve growth factor 1.